A 174-amino-acid polypeptide reads, in one-letter code: Endoribonuclease YbeY (174 aa).

Zn(2+) is bound by residues H129, H133, and H139.

Belongs to the endoribonuclease YbeY family. Requires Zn(2+) as cofactor.

Its subcellular location is the cytoplasm. Its function is as follows. Single strand-specific metallo-endoribonuclease involved in late-stage 70S ribosome quality control and in maturation of the 3' terminus of the 16S rRNA. This is Endoribonuclease YbeY from Lactobacillus delbrueckii subsp. bulgaricus (strain ATCC 11842 / DSM 20081 / BCRC 10696 / JCM 1002 / NBRC 13953 / NCIMB 11778 / NCTC 12712 / WDCM 00102 / Lb 14).